The primary structure comprises 483 residues: Trimethylamine methyltransferase MttB (483 aa).

Residue Pyl334 is a non-standard amino acid, pyrrolysine.

Belongs to the trimethylamine methyltransferase family. As to quaternary structure, can form a complex with MttC.

It catalyses the reaction Co(I)-[trimethylamine-specific corrinoid protein] + trimethylamine + H(+) = methyl-Co(III)-[trimethylamine-specific corrinoid protein] + dimethylamine. Its pathway is one-carbon metabolism; methanogenesis from trimethylamine. Catalyzes the transfer of a methyl group from trimethylamine to the corrinoid cofactor of MttC. In Methanosarcina thermophila, this protein is Trimethylamine methyltransferase MttB (mttB).